The following is a 276-amino-acid chain: Putative translation initiation factor eIF-2B subunit 2-like (276 aa).

The protein belongs to the eIF-2B alpha/beta/delta subunits family. Complex of two different subunits.

Its function is as follows. Catalyzes the exchange of initiation factor 2-bound GDP for GTP. The polypeptide is Putative translation initiation factor eIF-2B subunit 2-like (Pyrococcus furiosus (strain ATCC 43587 / DSM 3638 / JCM 8422 / Vc1)).